The following is a 262-amino-acid chain: 5'-nucleotidase SurE (262 aa).

A divalent metal cation-binding residues include Asp-8, Asp-9, Ser-39, and Asn-91.

The protein belongs to the SurE nucleotidase family. It depends on a divalent metal cation as a cofactor.

It is found in the cytoplasm. It catalyses the reaction a ribonucleoside 5'-phosphate + H2O = a ribonucleoside + phosphate. Its function is as follows. Nucleotidase that shows phosphatase activity on nucleoside 5'-monophosphates. The protein is 5'-nucleotidase SurE of Geobacter sulfurreducens (strain ATCC 51573 / DSM 12127 / PCA).